A 335-amino-acid polypeptide reads, in one-letter code: Methionine import ATP-binding protein MetN 2 (335 aa).

Residues isoleucine 2–valine 242 form the ABC transporter domain. Glycine 38–serine 45 contacts ATP.

Belongs to the ABC transporter superfamily. Methionine importer (TC 3.A.1.24) family. As to quaternary structure, the complex is composed of two ATP-binding proteins (MetN), two transmembrane proteins (MetI) and a solute-binding protein (MetQ).

Its subcellular location is the cell inner membrane. The enzyme catalyses L-methionine(out) + ATP + H2O = L-methionine(in) + ADP + phosphate + H(+). It carries out the reaction D-methionine(out) + ATP + H2O = D-methionine(in) + ADP + phosphate + H(+). Part of the ABC transporter complex MetNIQ involved in methionine import. Responsible for energy coupling to the transport system. The chain is Methionine import ATP-binding protein MetN 2 from Pseudomonas entomophila (strain L48).